The following is a 233-amino-acid chain: 28 kDa ribonucleoprotein, chloroplastic (233 aa).

Over residues 1–16 the composition is skewed to polar residues; that stretch reads CVAQTSEWEQEGSTNA. A disordered region spans residues 1–52; that stretch reads CVAQTSEWEQEGSTNAVLEGESDPEGAVSWGSETQVSDEGGVEGGQGFSEPP. RRM domains lie at 55–133 and 149–227; these read AKLF…KAAP and CRVY…VAEE.

It is found in the plastid. The protein localises to the chloroplast. Probably involved in the 3'-end processing of chloroplast mRNA's. The chain is 28 kDa ribonucleoprotein, chloroplastic from Spinacia oleracea (Spinach).